Reading from the N-terminus, the 252-residue chain is Ribosomal RNA small subunit methyltransferase J (252 aa).

S-adenosyl-L-methionine-binding positions include 126 to 127 and Asp176; that span reads ER.

Belongs to the methyltransferase superfamily. RsmJ family.

It is found in the cytoplasm. The enzyme catalyses guanosine(1516) in 16S rRNA + S-adenosyl-L-methionine = N(2)-methylguanosine(1516) in 16S rRNA + S-adenosyl-L-homocysteine + H(+). Its function is as follows. Specifically methylates the guanosine in position 1516 of 16S rRNA. This chain is Ribosomal RNA small subunit methyltransferase J, found in Bdellovibrio bacteriovorus (strain ATCC 15356 / DSM 50701 / NCIMB 9529 / HD100).